We begin with the raw amino-acid sequence, 422 residues long: Tyrosine--tRNA ligase (422 aa).

Tyrosine 36 is an L-tyrosine binding site. A 'HIGH' region motif is present at residues 41 to 50 (PTAGSLHIGH). L-tyrosine contacts are provided by tyrosine 174 and glutamine 178. A 'KMSKS' region motif is present at residues 234 to 238 (KFGKT). Residue lysine 237 participates in ATP binding. The S4 RNA-binding domain maps to 356–420 (TDLVTLLVES…GKKQYRLVTW (65 aa)).

Belongs to the class-I aminoacyl-tRNA synthetase family. TyrS type 1 subfamily. As to quaternary structure, homodimer.

It localises to the cytoplasm. It catalyses the reaction tRNA(Tyr) + L-tyrosine + ATP = L-tyrosyl-tRNA(Tyr) + AMP + diphosphate + H(+). Catalyzes the attachment of tyrosine to tRNA(Tyr) in a two-step reaction: tyrosine is first activated by ATP to form Tyr-AMP and then transferred to the acceptor end of tRNA(Tyr). This Aeromonas hydrophila subsp. hydrophila (strain ATCC 7966 / DSM 30187 / BCRC 13018 / CCUG 14551 / JCM 1027 / KCTC 2358 / NCIMB 9240 / NCTC 8049) protein is Tyrosine--tRNA ligase.